We begin with the raw amino-acid sequence, 130 residues long: Large ribosomal subunit protein bL17 (130 aa).

It belongs to the bacterial ribosomal protein bL17 family. In terms of assembly, part of the 50S ribosomal subunit. Contacts protein L32.

This is Large ribosomal subunit protein bL17 from Pectobacterium atrosepticum (strain SCRI 1043 / ATCC BAA-672) (Erwinia carotovora subsp. atroseptica).